Here is a 351-residue protein sequence, read N- to C-terminus: Methylthioribose-1-phosphate isomerase (351 aa).

Substrate-binding positions include Arg-53 to Ala-55, Arg-96, and Gln-205. The active-site Proton donor is the Asp-246. Asn-256–Lys-257 is a binding site for substrate.

This sequence belongs to the eIF-2B alpha/beta/delta subunits family. MtnA subfamily.

It catalyses the reaction 5-(methylsulfanyl)-alpha-D-ribose 1-phosphate = 5-(methylsulfanyl)-D-ribulose 1-phosphate. Its pathway is amino-acid biosynthesis; L-methionine biosynthesis via salvage pathway; L-methionine from S-methyl-5-thio-alpha-D-ribose 1-phosphate: step 1/6. Functionally, catalyzes the interconversion of methylthioribose-1-phosphate (MTR-1-P) into methylthioribulose-1-phosphate (MTRu-1-P). This is Methylthioribose-1-phosphate isomerase from Synechocystis sp. (strain ATCC 27184 / PCC 6803 / Kazusa).